We begin with the raw amino-acid sequence, 247 residues long: V-type proton ATPase subunit D (247 aa).

The protein belongs to the V-ATPase D subunit family. As to quaternary structure, V-ATPase is a heteromultimeric enzyme made up of two complexes: the ATP-hydrolytic V1 complex and the proton translocation V0 complex. The V1 complex consists of three catalytic AB heterodimers that form a heterohexamer, three peripheral stalks each consisting of EG heterodimers, one central rotor including subunits D and F, and the regulatory subunits C and H. The proton translocation complex V0 consists of the proton transport subunit a, a ring of proteolipid subunits c9c'', rotary subunit d, subunits e and f, and the accessory subunits ATP6AP1/Ac45 and ATP6AP2/PRR. Interacts with SNX10.

The protein resides in the membrane. The protein localises to the cytoplasmic vesicle. It localises to the clathrin-coated vesicle membrane. It is found in the cytoplasm. Its subcellular location is the cytoskeleton. The protein resides in the microtubule organizing center. The protein localises to the centrosome. It localises to the cell projection. It is found in the cilium. In terms of biological role, subunit of the V1 complex of vacuolar(H+)-ATPase (V-ATPase), a multisubunit enzyme composed of a peripheral complex (V1) that hydrolyzes ATP and a membrane integral complex (V0) that translocates protons. V-ATPase is responsible for acidifying and maintaining the pH of intracellular compartments and in some cell types, is targeted to the plasma membrane, where it is responsible for acidifying the extracellular environment. May play a role in cilium biogenesis through regulation of the transport and the localization of proteins to the cilium. This Oryctolagus cuniculus (Rabbit) protein is V-type proton ATPase subunit D (ATP6V1D).